Consider the following 296-residue polypeptide: Polyadenylate-binding protein 2-A (296 aa).

The segment at 1–106 (MAAVSSVASL…GELTGDQTIE (106 aa)) is disordered. Gly residues predominate over residues 71-82 (GRGGSGGGGAGG). Acidic residues predominate over residues 84 to 97 (EELEDEELEEEEPG). Positions 107–141 (DPELEAIKARVREMEEEAEKLKELQNEVEKQMNMS) form a coiled coil. Positions 146 to 296 (NAGPVIMSVE…ARATSWYTPY (151 aa)) are necessary for homooligomerization. Positions 163–240 (RSIYVGNVDY…RQIKVVPKRT (78 aa)) constitute an RRM domain.

As to quaternary structure, monomer and homooligomer. Binds RNA as a monomer and oligomerizes when bound to poly(A). As to expression, shows dynamic spatial expression throughout development. First expressed in the animal pole region of the egg and this pattern persists through to the blastula stage. In gastrula and neurula embryos, expressed mainly in ectodermal, neural and epidermal regions. Neural tissue-specific expression pattern persists into tailbud stage when expression is localized to the brain and spinal cord. At early tadpole stage, expression becomes gradually confined to the specific vesicle regions of the developing brain. At stage 39, expressed in the telencephalon and mesencephalon regions of the brain. Also detected in the eye and olfactory pit at the tadpole stage. Expressed during gut endoderm development. At stage 35, expressed exclusively in the anterior portion of the gut endoderm, which includes the prospective liver, stomach and pancreas. As development proceeds, expression becomes restricted to the pancreas, and by stage 46/47 (the seventh day of development) expression is localized exclusively to the pancreas. Expressed in most adult tissues.

It localises to the nucleus. Its subcellular location is the cytoplasm. Its function is as follows. Involved in the 3'-end formation of mRNA precursors (pre-mRNA) by the addition of a poly(A) tail of 200-250 nt to the upstream cleavage product. Stimulates poly(A) polymerase (PAPOLA) conferring processivity on the poly(A) tail elongation reaction and also controls the poly(A) tail length. Increases the affinity of poly(A) polymerase for RNA. Binds to poly(A) and to poly(G) with high affinity. May protect the poly(A) tail from degradation. This is Polyadenylate-binding protein 2-A (pabpn1-a) from Xenopus laevis (African clawed frog).